Reading from the N-terminus, the 1173-residue chain is Pyruvate-flavodoxin oxidoreductase (1173 aa).

4Fe-4S ferredoxin-type domains follow at residues 681-710 (NVPVWQTDKCTQCNQCAFICPHAAIRPVLI) and 735-766 (YRLAVSPLDCSGCGNCADVCPVKGKALSMQPL). Residues Cys-690, Cys-693, Cys-696, Cys-700, Cys-744, Cys-747, Cys-750, Cys-754, Cys-810, Cys-813, and Cys-838 each contribute to the [4Fe-4S] cluster site. Positions 922 to 933 (GEGTRERAEKVG) are enriched in basic and acidic residues. The interval 922 to 946 (GEGTRERAEKVGDTSGFANAREKSR) is disordered. Cys-1075 lines the [4Fe-4S] cluster pocket.

The protein belongs to the pyruvate:ferredoxin/flavodoxin oxidoreductase family. [4Fe-4S] cluster is required as a cofactor.

It carries out the reaction oxidized [flavodoxin] + pyruvate + CoA + 2 H(+) = reduced [flavodoxin] + acetyl-CoA + CO2. In terms of biological role, oxidoreductase required for the transfer of electrons from pyruvate to flavodoxin, which reduces nitrogenase. In Enterobacter agglomerans (Erwinia herbicola), this protein is Pyruvate-flavodoxin oxidoreductase (nifJ).